Reading from the N-terminus, the 149-residue chain is YbbR-like domain-containing protein in def 5'region (149 aa).

Residues 1–68 (IPVEVLAQGA…LRPNRVRVVE (68 aa)) form the YbbR-like domain.

This chain is YbbR-like domain-containing protein in def 5'region, found in Thermus thermophilus.